The primary structure comprises 505 residues: Lysine--tRNA ligase (505 aa).

Mg(2+) contacts are provided by Glu-415 and Glu-422.

This sequence belongs to the class-II aminoacyl-tRNA synthetase family. Homodimer. Mg(2+) is required as a cofactor.

It localises to the cytoplasm. The catalysed reaction is tRNA(Lys) + L-lysine + ATP = L-lysyl-tRNA(Lys) + AMP + diphosphate. In Serratia proteamaculans (strain 568), this protein is Lysine--tRNA ligase.